A 327-amino-acid chain; its full sequence is MATRIEFHKHGGPEVLQAVEFTPADPAENEIQVENKAIGINFIDTYIRSGLYPPPSLPSGLGTEAAGIVSKVGSGVKHIKAGDRVVYAQSALGAYSSVHNIIADKAAILPAAISFEQAAASFLKGLTVYYLLRKTYEIKPDEQFLFHAAAGGVGLIACQWAKALGAKLIGTVGTAQKAQSALKAGAWQVINYREEDLVERLKEITGGKKVRVVYDSVGRDTWERSLDCLQRRGLMVSFGNSSGAVTGVNLGILNQKGSLYVTRPSLQGYITTREELTEASNELFSLIASGVIKVDVAEQQKYPLKDAQRAHEILESRATQGSSLLIP.

Residues 42-46, Tyr130, 152-153, 173-177, Tyr192, Ser216, 238-241, 264-266, and Arg317 each bind NADP(+); these read FIDTY, GV, GTAQK, FGNS, and PSL.

The protein belongs to the zinc-containing alcohol dehydrogenase family. Quinone oxidoreductase subfamily. Homodimer.

The enzyme catalyses 2 a quinone + NADPH + H(+) = 2 a 1,4-benzosemiquinone + NADP(+). The protein is Quinone oxidoreductase 1 (qorA) of Escherichia coli (strain K12).